A 406-amino-acid chain; its full sequence is Succinylornithine transaminase (406 aa).

An N6-(pyridoxal phosphate)lysine modification is found at lysine 252.

It belongs to the class-III pyridoxal-phosphate-dependent aminotransferase family. AstC subfamily. It depends on pyridoxal 5'-phosphate as a cofactor.

It carries out the reaction N(2)-succinyl-L-ornithine + 2-oxoglutarate = N-succinyl-L-glutamate 5-semialdehyde + L-glutamate. It functions in the pathway amino-acid degradation; L-arginine degradation via AST pathway; L-glutamate and succinate from L-arginine: step 3/5. In terms of biological role, catalyzes the transamination of N(2)-succinylornithine and alpha-ketoglutarate into N(2)-succinylglutamate semialdehyde and glutamate. Can also act as an acetylornithine aminotransferase. In Escherichia coli O7:K1 (strain IAI39 / ExPEC), this protein is Succinylornithine transaminase.